Here is a 463-residue protein sequence, read N- to C-terminus: ATP synthase subunit beta (463 aa).

An ATP-binding site is contributed by 152 to 159 (GGAGVGKT).

It belongs to the ATPase alpha/beta chains family. As to quaternary structure, F-type ATPases have 2 components, CF(1) - the catalytic core - and CF(0) - the membrane proton channel. CF(1) has five subunits: alpha(3), beta(3), gamma(1), delta(1), epsilon(1). CF(0) has three main subunits: a(1), b(2) and c(9-12). The alpha and beta chains form an alternating ring which encloses part of the gamma chain. CF(1) is attached to CF(0) by a central stalk formed by the gamma and epsilon chains, while a peripheral stalk is formed by the delta and b chains.

Its subcellular location is the cell inner membrane. It carries out the reaction ATP + H2O + 4 H(+)(in) = ADP + phosphate + 5 H(+)(out). Produces ATP from ADP in the presence of a proton gradient across the membrane. The catalytic sites are hosted primarily by the beta subunits. In Shewanella sp. (strain ANA-3), this protein is ATP synthase subunit beta.